The following is a 119-amino-acid chain: uncharacterized protein (119 aa).

The protein localises to the mitochondrion. It is found in the nucleus. This is an uncharacterized protein from Schizosaccharomyces pombe (strain 972 / ATCC 24843) (Fission yeast).